Reading from the N-terminus, the 1243-residue chain is ATP-dependent helicase/nuclease subunit A (1243 aa).

The UvrD-like helicase ATP-binding domain occupies 2 to 475 (VNWTKEQEEA…IDLARNFRSR (474 aa)). 23-30 (AAAGSGKT) lines the ATP pocket. One can recognise a UvrD-like helicase C-terminal domain in the interval 502 to 803 (AAELIYGNKM…RIMTIHKSKG (302 aa)).

This sequence belongs to the helicase family. AddA subfamily. As to quaternary structure, heterodimer of AddA and AddB/RexB. The cofactor is Mg(2+).

It catalyses the reaction Couples ATP hydrolysis with the unwinding of duplex DNA by translocating in the 3'-5' direction.. The catalysed reaction is ATP + H2O = ADP + phosphate + H(+). Functionally, the heterodimer acts as both an ATP-dependent DNA helicase and an ATP-dependent, dual-direction single-stranded exonuclease. Recognizes the chi site generating a DNA molecule suitable for the initiation of homologous recombination. The AddA nuclease domain is required for chi fragment generation; this subunit has the helicase and 3' -&gt; 5' nuclease activities. This Oceanobacillus iheyensis (strain DSM 14371 / CIP 107618 / JCM 11309 / KCTC 3954 / HTE831) protein is ATP-dependent helicase/nuclease subunit A.